Here is a 150-residue protein sequence, read N- to C-terminus: Leukotriene C4 synthase (150 aa).

Residues 1 to 6 (MKDEVA) lie on the Cytoplasmic side of the membrane. The helical transmembrane segment at 7 to 27 (LLASVTLLGVLLQAYFSLQVI) threads the bilayer. At 28 to 48 (SARRAFRVSPPLTTGPPEFER) the chain is on the lumenal side. Arginine 30 lines the glutathione pocket. Arginine 31 (proton donor) is an active-site residue. Serine 36 carries the phosphoserine modification. A helical membrane pass occupies residues 49–69 (IYRAQVNCSEYFPLFLAMLWV). Glutathione contacts are provided by residues 51-55 (RAQVN) and 58-59 (EY). Over 70–73 (AGIF) the chain is Cytoplasmic. The helical transmembrane segment at 74-94 (FHEGAAALCGLVYLFARLRYF) threads the bilayer. 93–97 (YFQGY) lines the glutathione pocket. Topologically, residues 95–104 (QGYARSAQQR) are lumenal. Arginine 104 serves as the catalytic Proton acceptor. The helical transmembrane segment at 105 to 124 (LAPLYASARALWLLVALAAL) threads the bilayer. Residues 125–150 (GLLAHFLPAELRAALLGQLRKLLLRS) lie on the Cytoplasmic side of the membrane.

It belongs to the MAPEG family. In terms of assembly, homotrimer. Interacts with ALOX5AP and ALOX5. Post-translationally, phosphorylation at Ser-36 by RPS6KB1 inhibits the leukotriene-C4 synthase activity.

It localises to the nucleus outer membrane. Its subcellular location is the endoplasmic reticulum membrane. It is found in the nucleus membrane. It catalyses the reaction leukotriene C4 = leukotriene A4 + glutathione. It carries out the reaction (13S,14S)-epoxy-(4Z,7Z,9E,11E,16Z,19Z)-docosahexaenoate + glutathione = (13R)-S-glutathionyl-(14S)-hydroxy-(4Z,7Z,9E,11E,16Z,19Z)-docosahexaenoate. The protein operates within lipid metabolism; leukotriene C4 biosynthesis. Inhibited by MK886. In terms of biological role, catalyzes the conjugation of leukotriene A4 with reduced glutathione (GSH) to form leukotriene C4 with high specificity. Can also catalyze the transfer of a glutathionyl group from glutathione (GSH) to 13(S),14(S)-epoxy-docosahexaenoic acid to form maresin conjugate in tissue regeneration 1 (MCTR1), a bioactive lipid mediator that possess potent anti-inflammatory and proresolving actions. This Bos taurus (Bovine) protein is Leukotriene C4 synthase (LTC4S).